We begin with the raw amino-acid sequence, 314 residues long: DNA-directed RNA polymerase subunit alpha (314 aa).

The segment at 1–228 (MIEFEKPNIH…EHLAMFVDLT (228 aa)) is alpha N-terminal domain (alpha-NTD). Positions 245–314 (KEKMLEMTIE…DLGVSFRQDD (70 aa)) are alpha C-terminal domain (alpha-CTD).

This sequence belongs to the RNA polymerase alpha chain family. Homodimer. The RNAP catalytic core consists of 2 alpha, 1 beta, 1 beta' and 1 omega subunit. When a sigma factor is associated with the core the holoenzyme is formed, which can initiate transcription.

The enzyme catalyses RNA(n) + a ribonucleoside 5'-triphosphate = RNA(n+1) + diphosphate. Functionally, DNA-dependent RNA polymerase catalyzes the transcription of DNA into RNA using the four ribonucleoside triphosphates as substrates. This is DNA-directed RNA polymerase subunit alpha from Limosilactobacillus reuteri (strain DSM 20016) (Lactobacillus reuteri).